Reading from the N-terminus, the 134-residue chain is Profilin-3 (134 aa).

An intrachain disulfide couples Cys-13 to Cys-118. Positions 84–100 match the Involved in PIP2 interaction motif; sequence AVIRGKKGSGGITSKKT. Thr-114 carries the post-translational modification Phosphothreonine.

Belongs to the profilin family. In terms of assembly, occurs in many kinds of cells as a complex with monomeric actin in a 1:1 ratio. Post-translationally, phosphorylated by MAP kinases.

The protein resides in the cytoplasm. Its subcellular location is the cytoskeleton. Its function is as follows. Binds to actin and affects the structure of the cytoskeleton. At high concentrations, profilin prevents the polymerization of actin, whereas it enhances it at low concentrations. This chain is Profilin-3, found in Olea europaea (Common olive).